Here is a 47-residue protein sequence, read N- to C-terminus: Short neurotoxin D2A (47 aa).

Intrachain disulfides connect Cys3–Cys24 and Cys17–Cys39.

As to expression, expressed by the venom gland.

The protein resides in the secreted. This Micrurus pyrrhocryptus (Coral snake) protein is Short neurotoxin D2A.